A 255-amino-acid chain; its full sequence is NAD kinase (255 aa).

The active-site Proton acceptor is Asp44. Residues 44–45, His49, 114–115, Asp144, Ala152, 155–160, and Gln216 contribute to the NAD(+) site; these read DG, NE, and SAYNLS.

The protein belongs to the NAD kinase family. A divalent metal cation is required as a cofactor.

The protein resides in the cytoplasm. It catalyses the reaction NAD(+) + ATP = ADP + NADP(+) + H(+). Functionally, involved in the regulation of the intracellular balance of NAD and NADP, and is a key enzyme in the biosynthesis of NADP. Catalyzes specifically the phosphorylation on 2'-hydroxyl of the adenosine moiety of NAD to yield NADP. This is NAD kinase from Rickettsia rickettsii (strain Iowa).